We begin with the raw amino-acid sequence, 479 residues long: Ribosomal RNA small subunit methyltransferase F (479 aa).

S-adenosyl-L-methionine-binding positions include 125-131 (AAAPGSK), Glu-149, Asp-176, and Asp-194. Cys-247 acts as the Nucleophile in catalysis.

This sequence belongs to the class I-like SAM-binding methyltransferase superfamily. RsmB/NOP family.

The protein localises to the cytoplasm. The enzyme catalyses cytidine(1407) in 16S rRNA + S-adenosyl-L-methionine = 5-methylcytidine(1407) in 16S rRNA + S-adenosyl-L-homocysteine + H(+). Functionally, specifically methylates the cytosine at position 1407 (m5C1407) of 16S rRNA. The sequence is that of Ribosomal RNA small subunit methyltransferase F from Escherichia coli O139:H28 (strain E24377A / ETEC).